The primary structure comprises 518 residues: 3-octaprenyl-4-hydroxybenzoate carboxy-lyase (518 aa).

Asn177 lines the Mn(2+) pocket. Residues 180–182 (IYR), 194–196 (RWL), and 199–200 (RG) contribute to the prenylated FMN site. Glu243 provides a ligand contact to Mn(2+). Asp318 acts as the Proton donor in catalysis.

This sequence belongs to the UbiD family. In terms of assembly, homohexamer. Prenylated FMN is required as a cofactor. Requires Mn(2+) as cofactor.

The protein resides in the cell membrane. The enzyme catalyses a 4-hydroxy-3-(all-trans-polyprenyl)benzoate + H(+) = a 2-(all-trans-polyprenyl)phenol + CO2. It participates in cofactor biosynthesis; ubiquinone biosynthesis. Functionally, catalyzes the decarboxylation of 3-octaprenyl-4-hydroxy benzoate to 2-octaprenylphenol, an intermediate step in ubiquinone biosynthesis. In Burkholderia orbicola (strain AU 1054), this protein is 3-octaprenyl-4-hydroxybenzoate carboxy-lyase.